Here is a 307-residue protein sequence, read N- to C-terminus: Small ribosomal subunit protein uS3 (307 aa).

Residues 17-86 (MDEYFAEQLN…NPQIDAQEVK (70 aa)) enclose the KH type-2 domain. The span at 201-226 (IEEPAEKPAEKQVEKPAVAPKKEAAK) shows a compositional bias: basic and acidic residues. The disordered stretch occupies residues 201–265 (IEEPAEKPAE…QVEASEDFEE (65 aa)). Residues 240–265 (PTEEPEVAEPEEAEEAQVEASEDFEE) show a composition bias toward acidic residues.

The protein belongs to the universal ribosomal protein uS3 family. As to quaternary structure, part of the 30S ribosomal subunit.

Functionally, binds the lower part of the 30S subunit head. The chain is Small ribosomal subunit protein uS3 from Methanosarcina mazei (strain ATCC BAA-159 / DSM 3647 / Goe1 / Go1 / JCM 11833 / OCM 88) (Methanosarcina frisia).